A 173-amino-acid chain; its full sequence is Macro domain-containing protein in gbd 3'region (173 aa).

Residues 1-173 (MSGEHLQVVH…NYRLYRERLS (173 aa)) enclose the Macro domain.

It belongs to the MacroD-type family.

The polypeptide is Macro domain-containing protein in gbd 3'region (Cupriavidus necator (Alcaligenes eutrophus)).